The sequence spans 93 residues: Pyrimidine/purine nucleoside phosphorylase (93 aa).

This sequence belongs to the nucleoside phosphorylase PpnP family.

It catalyses the reaction a purine D-ribonucleoside + phosphate = a purine nucleobase + alpha-D-ribose 1-phosphate. It carries out the reaction adenosine + phosphate = alpha-D-ribose 1-phosphate + adenine. The catalysed reaction is cytidine + phosphate = cytosine + alpha-D-ribose 1-phosphate. The enzyme catalyses guanosine + phosphate = alpha-D-ribose 1-phosphate + guanine. It catalyses the reaction inosine + phosphate = alpha-D-ribose 1-phosphate + hypoxanthine. It carries out the reaction thymidine + phosphate = 2-deoxy-alpha-D-ribose 1-phosphate + thymine. The catalysed reaction is uridine + phosphate = alpha-D-ribose 1-phosphate + uracil. The enzyme catalyses xanthosine + phosphate = alpha-D-ribose 1-phosphate + xanthine. Functionally, catalyzes the phosphorolysis of diverse nucleosides, yielding D-ribose 1-phosphate and the respective free bases. Can use uridine, adenosine, guanosine, cytidine, thymidine, inosine and xanthosine as substrates. Also catalyzes the reverse reactions. This chain is Pyrimidine/purine nucleoside phosphorylase, found in Aliivibrio fischeri (strain ATCC 700601 / ES114) (Vibrio fischeri).